Here is a 160-residue protein sequence, read N- to C-terminus: Urease accessory protein UreE (160 aa).

It belongs to the UreE family.

It localises to the cytoplasm. Involved in urease metallocenter assembly. Binds nickel. Probably functions as a nickel donor during metallocenter assembly. The protein is Urease accessory protein UreE of Acinetobacter baumannii (strain ACICU).